Reading from the N-terminus, the 75-residue chain is U6-lycotoxin-Ls1g (75 aa).

Residues 1–21 (MKLLLFTALVLVVISLIEVEA) form the signal peptide. A propeptide spanning residues 22–25 (ENER) is cleaved from the precursor.

Belongs to the neurotoxin 19 (CSTX) family. 06 (U6-Lctx) subfamily. Post-translationally, contains 4 disulfide bonds. As to expression, expressed by the venom gland.

Its subcellular location is the secreted. This Lycosa singoriensis (Wolf spider) protein is U6-lycotoxin-Ls1g.